Consider the following 333-residue polypeptide: Fructose-1,6-bisphosphatase class 1 1 (333 aa).

Residues E81, D100, L102, and D103 each coordinate Mg(2+). Substrate contacts are provided by residues 103–106 (DGSS) and N191. Position 263 (E263) interacts with Mg(2+).

This sequence belongs to the FBPase class 1 family. As to quaternary structure, homotetramer. It depends on Mg(2+) as a cofactor.

It localises to the cytoplasm. It carries out the reaction beta-D-fructose 1,6-bisphosphate + H2O = beta-D-fructose 6-phosphate + phosphate. Its pathway is carbohydrate biosynthesis; gluconeogenesis. With respect to regulation, fructose-1,6-bisphosphatase II is not light-activated. In Cereibacter sphaeroides (Rhodobacter sphaeroides), this protein is Fructose-1,6-bisphosphatase class 1 1.